The sequence spans 194 residues: Imidazoleglycerol-phosphate dehydratase (194 aa).

The protein belongs to the imidazoleglycerol-phosphate dehydratase family.

The protein resides in the cytoplasm. It catalyses the reaction D-erythro-1-(imidazol-4-yl)glycerol 3-phosphate = 3-(imidazol-4-yl)-2-oxopropyl phosphate + H2O. The protein operates within amino-acid biosynthesis; L-histidine biosynthesis; L-histidine from 5-phospho-alpha-D-ribose 1-diphosphate: step 6/9. The sequence is that of Imidazoleglycerol-phosphate dehydratase from Chloroherpeton thalassium (strain ATCC 35110 / GB-78).